A 456-amino-acid chain; its full sequence is Exodeoxyribonuclease 7 large subunit (456 aa).

The protein belongs to the XseA family. In terms of assembly, heterooligomer composed of large and small subunits.

The protein localises to the cytoplasm. It carries out the reaction Exonucleolytic cleavage in either 5'- to 3'- or 3'- to 5'-direction to yield nucleoside 5'-phosphates.. In terms of biological role, bidirectionally degrades single-stranded DNA into large acid-insoluble oligonucleotides, which are then degraded further into small acid-soluble oligonucleotides. The protein is Exodeoxyribonuclease 7 large subunit of Escherichia coli (strain SE11).